The sequence spans 336 residues: D-altritol 5-dehydrogenase (336 aa).

Residues C37, H59, E60, C89, C92, C95, and C103 each contribute to the Zn(2+) site.

The protein belongs to the zinc-containing alcohol dehydrogenase family. It depends on Zn(2+) as a cofactor.

It carries out the reaction D-altritol + NAD(+) = keto-D-tagatose + NADH + H(+). Its pathway is carbohydrate metabolism. Involved in D-altritol catabolism. Catalyzes the oxidation of D-altritol to D-tagatose. In Agrobacterium fabrum (strain C58 / ATCC 33970) (Agrobacterium tumefaciens (strain C58)), this protein is D-altritol 5-dehydrogenase.